The sequence spans 490 residues: WD repeat-containing protein JIP5 (490 aa).

7 WD repeats span residues 23–64 (KYND…ERMQ), 70–112 (QKKK…GSCR), 118–155 (PIESSVGKHLFTVGKDHVVKKANTETGKVLTKTDISKD), 157–196 (SSKDAVTKLCHSTTHPFLLSGTENGHVLVYDSNDLSNKFK), 242–284 (DQED…LMDQ), 286–327 (SRIK…HRVN), and 340–377 (GTADEVGFLDIDYEYRLLTAGMDSMKLWSAEGDDEEEE). Residues 368–490 (SAEGDDEEEE…SHGIRRFDGL (123 aa)) are disordered. Acidic residues-rich tracts occupy residues 370–406 (EGDDEEEEESEGEESEESEESDEESDESSGEESEGDD) and 413–437 (EESDSNDEDEVESSDDEKEKEEEST). The segment covering 438-448 (ETDHKNIEAES) has biased composition (basic and acidic residues). The segment covering 450-461 (KQANKRQASQPK) has biased composition (polar residues). Residues 469-484 (KQKLKQTSKLAHSHGI) are compositionally biased toward basic residues.

Belongs to the WD repeat WDR55 family.

It localises to the nucleus. Its subcellular location is the nucleolus. This chain is WD repeat-containing protein JIP5 (JIP5), found in Meyerozyma guilliermondii (strain ATCC 6260 / CBS 566 / DSM 6381 / JCM 1539 / NBRC 10279 / NRRL Y-324) (Yeast).